A 396-amino-acid chain; its full sequence is Purine ribonucleoside efflux pump NepI (396 aa).

The Cytoplasmic portion of the chain corresponds to 1-21 (MSEFIAENRGADAITRPNWSA). The chain crosses the membrane as a helical span at residues 22–42 (VFSVAFCVACLIIVEFLPVSL). At 43–54 (LTPMAQDLGISE) the chain is on the periplasmic side. The chain crosses the membrane as a helical span at residues 55–75 (GVAGQSVTVTAFVAMFASLFI). The Cytoplasmic portion of the chain corresponds to 76 to 85 (TQTIQATDRR). The helical transmembrane segment at 86–106 (YVVILFAVLLTLSCLLVSFAN) threads the bilayer. Residue Ser-107 is a topological domain, periplasmic. The chain crosses the membrane as a helical span at residues 108–128 (FSLLLIGRACLGLALGGFWAI). The Cytoplasmic portion of the chain corresponds to 129–147 (SASLTMRLVPPRTVPKALS). The helical transmembrane segment at 148–168 (VIFGAVSIALVIAAPLGGFLG) threads the bilayer. Topologically, residues 169–175 (ELIGWRN) are periplasmic. Residues 176–196 (VFNAAAAMGVLCIFWIIKSLP) form a helical membrane-spanning segment. The Cytoplasmic segment spans residues 197 to 215 (SLPGEPSHQKQNTFRLLQR). A helical membrane pass occupies residues 216–236 (PGVMAGMIAIFMSFAGQFAFF). At 237–255 (TYIRPVYMNLAGFGVDGLT) the chain is on the periplasmic side. Residues 256-276 (LVLLSFGIASFVGTSLSSFIL) traverse the membrane as a helical segment. At 277-281 (KRSVK) the chain is on the cytoplasmic side. Residues 282–302 (LALAGAPFVLALSALVLTLWG) form a helical membrane-spanning segment. The Periplasmic segment spans residues 303 to 305 (SDK). A helical membrane pass occupies residues 306 to 326 (IVATGVAIIWGLTFALIPVGW). The Cytoplasmic portion of the chain corresponds to 327–343 (STWITRSLADQAEKAGS). A helical membrane pass occupies residues 344–364 (IQVAVIQLANTCGAAIGGYAL). At 365-366 (DN) the chain is on the periplasmic side. Residues 367 to 387 (IGLTSPLMLSGTLMLLTALLV) form a helical membrane-spanning segment. The Cytoplasmic portion of the chain corresponds to 388–396 (TAKVKMKKS).

This sequence belongs to the major facilitator superfamily. DHA1 family. NepI (TC 2.A.1.2.26) subfamily.

Its subcellular location is the cell inner membrane. It catalyses the reaction inosine(in) + H(+)(out) = inosine(out) + H(+)(in). The enzyme catalyses guanosine(in) + H(+)(out) = guanosine(out) + H(+)(in). Its function is as follows. Involved in the efflux of purine ribonucleosides, such as inosine and guanosine. The sequence is that of Purine ribonucleoside efflux pump NepI from Escherichia coli O127:H6 (strain E2348/69 / EPEC).